The primary structure comprises 353 residues: Alanine racemase (353 aa).

The Proton acceptor; specific for D-alanine role is filled by K33. K33 bears the N6-(pyridoxal phosphate)lysine mark. Residue R129 coordinates substrate. Y250 (proton acceptor; specific for L-alanine) is an active-site residue. M298 is a binding site for substrate.

Belongs to the alanine racemase family. It depends on pyridoxal 5'-phosphate as a cofactor.

The enzyme catalyses L-alanine = D-alanine. It participates in amino-acid biosynthesis; D-alanine biosynthesis; D-alanine from L-alanine: step 1/1. Functionally, catalyzes the interconversion of L-alanine and D-alanine. May also act on other amino acids. The protein is Alanine racemase (alr) of Azoarcus sp. (strain BH72).